Consider the following 208-residue polypeptide: Flavin-dependent thymidylate synthase (208 aa).

A ThyX domain is found at 1 to 208; sequence MEVICKHYTP…QYLFEDCLKH (208 aa). FAD is bound by residues S50 and 74 to 76; that span reads RHR. Residues 71–74, 84–86, and K147 each bind dUMP; these read ELSR and SSR. A ThyX motif motif is present at residues 74–84; sequence RHRIASLSVKS. Residues 163–165 and N169 each bind FAD; that span reads NAR. R174 lines the dUMP pocket. R174 (involved in ionization of N3 of dUMP, leading to its activation) is an active-site residue.

It belongs to the thymidylate synthase ThyX family. In terms of assembly, homotetramer. FAD serves as cofactor.

It catalyses the reaction dUMP + (6R)-5,10-methylene-5,6,7,8-tetrahydrofolate + NADPH + H(+) = dTMP + (6S)-5,6,7,8-tetrahydrofolate + NADP(+). Its pathway is pyrimidine metabolism; dTTP biosynthesis. Catalyzes the reductive methylation of 2'-deoxyuridine-5'-monophosphate (dUMP) to 2'-deoxythymidine-5'-monophosphate (dTMP) while utilizing 5,10-methylenetetrahydrofolate (mTHF) as the methyl donor, and NAD(P)H and FADH(2) as the reductant. The protein is Flavin-dependent thymidylate synthase of Helicobacter pylori (strain ATCC 700392 / 26695) (Campylobacter pylori).